The chain runs to 283 residues: Energy-coupling factor transporter ATP-binding protein EcfA1 (283 aa).

Positions 7–244 (VEFRHVSFTY…PELLQEIGLD (238 aa)) constitute an ABC transporter domain. ATP is bound at residue 41–48 (GHNGSGKS).

This sequence belongs to the ABC transporter superfamily. Energy-coupling factor EcfA family. As to quaternary structure, forms a stable energy-coupling factor (ECF) transporter complex composed of 2 membrane-embedded substrate-binding proteins (S component), 2 ATP-binding proteins (A component) and 2 transmembrane proteins (T component).

It is found in the cell membrane. Functionally, ATP-binding (A) component of a common energy-coupling factor (ECF) ABC-transporter complex. Unlike classic ABC transporters this ECF transporter provides the energy necessary to transport a number of different substrates. The protein is Energy-coupling factor transporter ATP-binding protein EcfA1 of Lactobacillus acidophilus (strain ATCC 700396 / NCK56 / N2 / NCFM).